An 848-amino-acid polypeptide reads, in one-letter code: Coiled-coil and C2 domain-containing protein 1B (848 aa).

The span at 1-10 (MPGPRPRKGP) shows a compositional bias: basic residues. Disordered stretches follow at residues 1–21 (MPGP…ETAK) and 53–75 (ALTG…PLPM). The stretch at 165-193 (LQALLEERIRNYREAAASAKEAGEAAKAR) forms a coiled coil. Disordered stretches follow at residues 217–276 (EDEI…DPDP), 326–353 (VDLS…ATQG), 433–460 (DFAE…QDSV), and 476–523 (ALVD…SPSV). Pro residues predominate over residues 438 to 448 (PVPPGFPPIPG). Position 455 is a phosphoserine (Ser-455). The span at 476 to 485 (ALVDDDEESD) shows a compositional bias: acidic residues. 2 stretches are compositionally biased toward low complexity: residues 487 to 498 (PAQAPLAKKPAQ) and 509 to 522 (EPKA…LSPS). Ser-583 carries the post-translational modification Phosphoserine. Thr-586 is modified (phosphothreonine). Residues 600–626 (LRLSQKAEEVYAQLQKMLQEQQAKCLL) adopt a coiled-coil conformation. One can recognise a C2 domain in the interval 666–805 (DPPSHHFELK…EKECEIREIM (140 aa)).

Belongs to the CC2D1 family. As to quaternary structure, interacts with CHMP4B.

It is found in the nucleus. Functionally, transcription factor that binds specifically to the DRE (dual repressor element) and represses HTR1A gene transcription in neuronal cells. This is Coiled-coil and C2 domain-containing protein 1B (Cc2d1b) from Mus musculus (Mouse).